Reading from the N-terminus, the 944-residue chain is Isoleucine--tRNA ligase (944 aa).

A 'HIGH' region motif is present at residues Pro-58–His-68. L-isoleucyl-5'-AMP is bound at residue Glu-563. The 'KMSKS' region motif lies at Lys-604–Ser-608. Lys-607 provides a ligand contact to ATP. Zn(2+) is bound by residues Cys-907, Cys-910, Cys-927, and Cys-930.

The protein belongs to the class-I aminoacyl-tRNA synthetase family. IleS type 1 subfamily. As to quaternary structure, monomer. It depends on Zn(2+) as a cofactor.

It localises to the cytoplasm. It carries out the reaction tRNA(Ile) + L-isoleucine + ATP = L-isoleucyl-tRNA(Ile) + AMP + diphosphate. In terms of biological role, catalyzes the attachment of isoleucine to tRNA(Ile). As IleRS can inadvertently accommodate and process structurally similar amino acids such as valine, to avoid such errors it has two additional distinct tRNA(Ile)-dependent editing activities. One activity is designated as 'pretransfer' editing and involves the hydrolysis of activated Val-AMP. The other activity is designated 'posttransfer' editing and involves deacylation of mischarged Val-tRNA(Ile). The polypeptide is Isoleucine--tRNA ligase (Salmonella typhi).